We begin with the raw amino-acid sequence, 127 residues long: Small ribosomal subunit protein uS11 (127 aa).

Belongs to the universal ribosomal protein uS11 family. Part of the 30S ribosomal subunit. Interacts with proteins S7 and S18. Binds to IF-3.

Functionally, located on the platform of the 30S subunit, it bridges several disparate RNA helices of the 16S rRNA. Forms part of the Shine-Dalgarno cleft in the 70S ribosome. In Chlorobium luteolum (strain DSM 273 / BCRC 81028 / 2530) (Pelodictyon luteolum), this protein is Small ribosomal subunit protein uS11.